Here is a 206-residue protein sequence, read N- to C-terminus: Ribonuclease HII (206 aa).

In terms of domain architecture, RNase H type-2 spans 27 to 206 (ARIAGVDEAG…CALHRRSFKH (180 aa)). Residues D33, E34, and D125 each coordinate a divalent metal cation.

Belongs to the RNase HII family. Mn(2+) serves as cofactor. The cofactor is Mg(2+).

Its subcellular location is the cytoplasm. It catalyses the reaction Endonucleolytic cleavage to 5'-phosphomonoester.. In terms of biological role, endonuclease that specifically degrades the RNA of RNA-DNA hybrids. This Moorella thermoacetica (strain ATCC 39073 / JCM 9320) protein is Ribonuclease HII.